Here is a 581-residue protein sequence, read N- to C-terminus: Alpha-amylase 2 (581 aa).

The N-terminal stretch at 1-24 is a signal peptide; sequence MNYRRNICLRIGWMLLFAFIPAYA. A disulfide bond links Cys-56 and Cys-64. A substrate-binding site is contributed by Trp-109. Position 147 (Asn-147) interacts with Ca(2+). Cys-176 and Cys-191 are joined by a disulfide. Residue Asp-202 coordinates Ca(2+). Arg-231 lines the substrate pocket. Positions 233, 237, and 257 each coordinate Ca(2+). The active-site Nucleophile is the Asp-233. A substrate-binding site is contributed by 236-237; that stretch reads KH. Glu-257 functions as the Proton donor in the catalytic mechanism. Gly-261 is a binding site for substrate. A disulfide bridge links Cys-267 with Cys-311. An N-linked (GlcNAc...) asparagine glycan is attached at Asn-291. Substrate is bound at residue Asp-325. Asn-332 carries an N-linked (GlcNAc...) asparagine glycan. Arg-372 is a substrate binding site. Ser-551 is lipidated: GPI-anchor amidated serine. The propeptide at 552-581 is removed in mature form; sequence EAKTIRSFTKLKLFILLIAVPFALPMIILI.

It belongs to the glycosyl hydrolase 13 family. Requires Ca(2+) as cofactor.

It is found in the cell membrane. The enzyme catalyses Endohydrolysis of (1-&gt;4)-alpha-D-glucosidic linkages in polysaccharides containing three or more (1-&gt;4)-alpha-linked D-glucose units.. The protein is Alpha-amylase 2 (aah2) of Schizosaccharomyces pombe (strain 972 / ATCC 24843) (Fission yeast).